The following is a 400-amino-acid chain: Enoyl-[acyl-carrier-protein] reductase [NADH] 1 (400 aa).

NAD(+) contacts are provided by residues 48–53, 74–75, 111–112, and 139–140; these read GASSGY, FE, DA, and LA. Position 225 (Tyr-225) interacts with substrate. Tyr-235 serves as the catalytic Proton donor. Residues Lys-244 and 273–275 each bind NAD(+); that span reads VVT.

Belongs to the TER reductase family. In terms of assembly, monomer.

It catalyses the reaction a 2,3-saturated acyl-[ACP] + NAD(+) = a (2E)-enoyl-[ACP] + NADH + H(+). It functions in the pathway lipid metabolism; fatty acid biosynthesis. Functionally, involved in the final reduction of the elongation cycle of fatty acid synthesis (FAS II). Catalyzes the reduction of a carbon-carbon double bond in an enoyl moiety that is covalently linked to an acyl carrier protein (ACP). The chain is Enoyl-[acyl-carrier-protein] reductase [NADH] 1 from Vibrio parahaemolyticus serotype O3:K6 (strain RIMD 2210633).